The sequence spans 1682 residues: Sodium channel protein type 7 subunit alpha (1682 aa).

The Cytoplasmic segment spans residues Met-1–His-117. Residues Thr-100–Lys-401 form an I repeat. Residues Pro-118 to Leu-137 traverse the membrane as a helical segment. Residues Thr-138–Pro-141 lie on the Extracellular side of the membrane. A helical membrane pass occupies residues Lys-142–Gly-167. At Val-168–Asp-178 the chain is on the cytoplasmic side. The chain crosses the membrane as a helical span at residues Pro-179 to Tyr-196. Over Ser-197–Asp-200 the chain is Extracellular. The helical transmembrane segment at Phe-201 to Leu-219 threads the bilayer. Residues Asn-220–Leu-237 are Cytoplasmic-facing. A helical transmembrane segment spans residues Ile-238 to Phe-259. At Met-260–Ser-338 the chain is on the extracellular side. Residues Cys-267 and Cys-307 are joined by a disulfide bond. 3 N-linked (GlcNAc...) asparagine glycosylation sites follow: Asn-276, Asn-281, and Asn-309. Residues Phe-339–Ser-366 constitute an intramembrane region (pore-forming). Position 367 (Gly-367) is a topological domain, extracellular. The helical transmembrane segment at Lys-368–Ile-407 threads the bilayer. Residues Ser-408–Pro-505 lie on the Cytoplasmic side of the membrane. Phosphoserine; by PKA is present on Ser-442. The II repeat unit spans residues Cys-487–Gly-758. A helical transmembrane segment spans residues Phe-506–Phe-521. Residues Leu-522 to Ser-530 are Extracellular-facing. The helical transmembrane segment at Lys-531–Met-559 threads the bilayer. Residues His-560–Gly-568 are Cytoplasmic-facing. Residues Trp-569–Leu-586 traverse the membrane as a helical segment. At Ala-587 to Met-592 the chain is on the extracellular side. A helical membrane pass occupies residues Ala-593–Tyr-609. The Cytoplasmic portion of the chain corresponds to Trp-610–Ala-626. The helical transmembrane segment at Leu-627–Glu-655 threads the bilayer. Topologically, residues Phe-656–Asp-673 are extracellular. Disulfide bonds link Cys-658–Cys-664 and Cys-696–Cys-705. Positions Phe-674 to Ala-700 form an intramembrane region, pore-forming. A topological domain (extracellular) is located at residue Gly-701. Residues Gln-702–Ser-732 form a helical membrane-spanning segment. The Cytoplasmic segment spans residues Ser-733–Asn-934. Residue Thr-777 is modified to Phosphothreonine; by PKA. Residues Thr-801–Ser-871 are disordered. Basic and acidic residues predominate over residues Phe-804–Thr-819. The span at Glu-820–Glu-834 shows a compositional bias: polar residues. Ser-843 is modified (phosphoserine). Residues Ser-869 and Ser-905 each carry the phosphoserine; by PKA modification. Residues Lys-916–Leu-1224 form an III repeat. The chain crosses the membrane as a helical span at residues Trp-935–Phe-953. Residues Glu-954–Arg-961 lie on the Extracellular side of the membrane. Residues Lys-962–Tyr-990 traverse the membrane as a helical segment. Topologically, residues Gly-991–Asn-998 are cytoplasmic. Residues Gly-999 to Arg-1020 form a helical membrane-spanning segment. A topological domain (extracellular) is located at residue Glu-1021. The helical transmembrane segment at Glu-1022–Gln-1040 threads the bilayer. At Phe-1041–Thr-1055 the chain is on the cytoplasmic side. Residues Leu-1056–Phe-1080 traverse the membrane as a helical segment. Residues Ala-1081–Asn-1127 are Extracellular-facing. Cysteines 1087 and 1107 form a disulfide. Asn-1103 and Asn-1113 each carry an N-linked (GlcNAc...) asparagine glycan. The pore-forming intramembrane region spans Val-1128 to Ser-1154. At Val-1155–Ile-1167 the chain is on the extracellular side. A helical membrane pass occupies residues Tyr-1168–Lys-1202. The Cytoplasmic portion of the chain corresponds to Leu-1203–Ser-1250. One copy of the IV repeat lies at Val-1233–Gln-1531. A helical transmembrane segment spans residues Gln-1251–Thr-1272. Residues Asp-1273–Ser-1276 are Extracellular-facing. Residues Leu-1277 to Phe-1305 traverse the membrane as a helical segment. The Cytoplasmic segment spans residues Arg-1306–Ile-1312. Residues Ala-1313–Tyr-1338 traverse the membrane as a helical segment. Residues Leu-1339–Pro-1341 lie on the Extracellular side of the membrane. A helical membrane pass occupies residues Pro-1342–Gly-1362. Topologically, residues Pro-1363–Leu-1377 are cytoplasmic. The chain crosses the membrane as a helical span at residues Pro-1378–Phe-1402. Residues Ala-1403–Phe-1420 lie on the Extracellular side of the membrane. The pore-forming intramembrane region spans Gly-1421–Phe-1444. Residues Asn-1445–Asn-1468 are Extracellular-facing. A disulfide bridge links Cys-1451 with Cys-1466. The helical transmembrane segment at Pro-1469–Lys-1504 threads the bilayer. Over Lys-1505–Ile-1682 the chain is Cytoplasmic.

Belongs to the sodium channel (TC 1.A.1.10) family. SCN7A subfamily. In terms of assembly, the sodium channel formed by SCN7A is probably a heterooligomeric complex consisting of the ion conducting pore forming alpha subunit SCN7A and regulatory beta subunits such as SCN3B. Interacts with ATP1A1; activates ATP1A1 and thereby indirectly signals to nearby neurons to regulate sodium homeostasis. Heart and uterus.

The protein localises to the cell membrane. The enzyme catalyses Na(+)(in) = Na(+)(out). In terms of biological role, sodium leak channel functioning as an osmosensor regulating sodium ion levels in various tissues and organs. While most sodium channels are voltage-gated, SCN7A is not and lets sodium flow through membrane along its concentration gradient. In glial cells of the central nervous system, senses body-fluid sodium levels and controls salt intake behavior as well as voluntary water intake through activation of nearby neurons to maintain appropriate sodium levels in the body. By mediating sodium influx into keratinocytes, also plays a role in skin barrier homeostasis. The protein is Sodium channel protein type 7 subunit alpha of Homo sapiens (Human).